Here is a 473-residue protein sequence, read N- to C-terminus: Bactericidal permeability-increasing protein (473 aa).

An N-terminal signal peptide occupies residues 1-18 (MVLCCWLALVALIPMTLS). Residues 19–29 (INPGVKVRLTG) are central sheet, part 1. An N-terminal barrel region spans residues 28–209 (TGKGLEYGRQ…SDLNPQLKTL (182 aa)). Cys153 and Cys192 are disulfide-bonded. Positions 211-275 (VLAKVDQYAE…INNMLYISVS (65 aa)) are central sheet, part 2. The segment at 225–230 (MVSSPT) is cleavage sites for elastase. A C-terminal barrel region spans residues 276–446 (AFTINSAAFV…LAKGYPLPTL (171 aa)). An N-linked (GlcNAc...) asparagine glycan is attached at Asn365. The central sheet, part 3 stretch occupies residues 453–472 (NTELQVLKDYMLIGTDVQFT).

The protein belongs to the BPI/LBP/Plunc superfamily. BPI/LBP family. In terms of assembly, monomer. Homodimer; disulfide-linked. In terms of tissue distribution, expressed in spleen. Lower expression in gill, head kidney, entire kidney, skin, intestine and blood and lowest expression in liver and muscle.

Its subcellular location is the secreted. In terms of biological role, the cytotoxic action of BPI is limited to many species of Gram-negative bacteria; this specificity may be explained by a strong affinity of the very basic N-terminal half for the negatively charged lipopolysaccharides that are unique to the Gram-negative bacterial outer envelope. Exhibits neutralizing capacity towards P.aeruginosa lipopolysaccharides (LPS) and has bactericidal activity against multiple drug resistant (MDR) P.aeruginosa strains derived from people with cystic fibrosis. Has antibacterial activity against E.coli, but not against S.iniae. The protein is Bactericidal permeability-increasing protein of Sebastes schlegelii (Korean rockfish).